Here is a 443-residue protein sequence, read N- to C-terminus: Signal recognition particle 54 kDa protein (443 aa).

Residues Gly-107–Thr-114, Asp-189–Arg-193, and Thr-247–Asp-250 each bind GTP.

It belongs to the GTP-binding SRP family. SRP54 subfamily. In terms of assembly, part of the signal recognition particle protein translocation system, which is composed of SRP and FtsY. Archaeal SRP consists of a 7S RNA molecule of 300 nucleotides and two protein subunits: SRP54 and SRP19.

Its subcellular location is the cytoplasm. It carries out the reaction GTP + H2O = GDP + phosphate + H(+). Functionally, involved in targeting and insertion of nascent membrane proteins into the cytoplasmic membrane. Binds to the hydrophobic signal sequence of the ribosome-nascent chain (RNC) as it emerges from the ribosomes. The SRP-RNC complex is then targeted to the cytoplasmic membrane where it interacts with the SRP receptor FtsY. This chain is Signal recognition particle 54 kDa protein, found in Pyrococcus furiosus (strain ATCC 43587 / DSM 3638 / JCM 8422 / Vc1).